We begin with the raw amino-acid sequence, 129 residues long: Profilin-4 (129 aa).

The protein belongs to the profilin family. In terms of tissue distribution, expressed in testis, in seminiferous tubules (at protein level). Expressed in spermatocytes and spermatids, but not in spermatogonium.

It localises to the cytoplasm. Involved in male fertility. Required for manchette development and acrosome biogenesis during spermiogenesis. Binds in vitro to phospholipids, including phosphatidylinositol 3-phosphate (PtdIns(3)P), phosphatidylinositol 4,5-bisphosphate (PtdIns(4,5)P2), phosphatidylinositol 4-phosphate (PtdIns(4)P) and phosphatidic acid (PA). Contrary to other profilin family members, does not bind to actin in vitro. The chain is Profilin-4 (Pfn4) from Rattus norvegicus (Rat).